The sequence spans 286 residues: 4-hydroxybenzoate octaprenyltransferase (286 aa).

7 helical membrane passes run 21–40, 95–115, 142–162, 167–187, 210–230, 235–255, and 266–286; these read GTLL…AGGM, ILFV…NGLV, FLGI…TGEV, WWLF…YAMV, QIIG…GWSA, LYGL…MLIF, and FLNN…DYLI.

This sequence belongs to the UbiA prenyltransferase family. The cofactor is Mg(2+).

Its subcellular location is the cell inner membrane. The catalysed reaction is all-trans-octaprenyl diphosphate + 4-hydroxybenzoate = 4-hydroxy-3-(all-trans-octaprenyl)benzoate + diphosphate. The protein operates within cofactor biosynthesis; ubiquinone biosynthesis. In terms of biological role, catalyzes the prenylation of para-hydroxybenzoate (PHB) with an all-trans polyprenyl group. Mediates the second step in the final reaction sequence of ubiquinone-8 (UQ-8) biosynthesis, which is the condensation of the polyisoprenoid side chain with PHB, generating the first membrane-bound Q intermediate 3-octaprenyl-4-hydroxybenzoate. In Shewanella baltica (strain OS155 / ATCC BAA-1091), this protein is 4-hydroxybenzoate octaprenyltransferase.